A 490-amino-acid chain; its full sequence is 5'-3' exonuclease PLD3 (490 aa).

Over 1-38 the chain is Cytoplasmic; the sequence is MKPKLMYQELKVPAEEPANELPMNEIEAWKAAEKKARW. Residues 39-59 form a helical; Signal-anchor for type II membrane protein membrane-spanning segment; sequence VLLVLILAVVGFGALMTQLFL. Residues 60–490 lie on the Lumenal side of the membrane; that stretch reads WEYGDLHLFG…DSVGNACRLL (431 aa). Disulfide bonds link Cys-77-Cys-239 and Cys-81-Cys-237. 2 N-linked (GlcNAc...) asparagine glycosylation sites follow: Asn-97 and Asn-132. Residues 196–223 form the PLD phosphodiesterase 1 domain; it reads THGVLHTKFWVVDQTHFYLGSANMDWRS. Residues His-201, Lys-203, and Asp-208 contribute to the active site. The Proton donor role is filled by His-201. Positions 201 and 203 each coordinate phosphate. Asn-218 contributes to the phosphate binding site. N-linked (GlcNAc...) asparagine glycosylation is found at Asn-236, Asn-284, and Asn-387. A disulfide bond links Cys-366 and Cys-487. In terms of domain architecture, PLD phosphodiesterase 2 spans 411–437; sequence YARVNHNKYMVTERATYIGTSNWSGNY. Residue His-416 coordinates phosphate. The active-site Nucleophile is His-416. Phe-438 is a binding site for Mg(2+).

It belongs to the phospholipase D family. In terms of assembly, homodimer. Interacts with APP. N-glycosylated. Post-translationally, proteolytically processed to a soluble active form that is stable within endosomes and lysosomes. During transport through the secretory pathway becomes proteolysed by cysteine proteases, thereby releasing a stable soluble lysosomal lumenal polypeptide, whereas the transmembrane-bound fragment is rapidly degraded. Its transport route to lysosomes involves ubiquitination and the ESCRT complex. In terms of processing, ubiquitinated at N-terminus. Ubiquitination mediates sorting into lysosomes. Widely expressed. In the brain, high levels of expression are detected in the frontal, temporal and occipital cortices and hippocampus. Expressed at low level in corpus callosum. Expressed in plasmacytoid dendritic cells and monocytes (at protein level).

The protein resides in the endoplasmic reticulum membrane. Its subcellular location is the lysosome lumen. It is found in the early endosome membrane. The protein localises to the late endosome membrane. It localises to the golgi apparatus membrane. The protein resides in the endosome membrane. The enzyme catalyses Exonucleolytic cleavage in the 5'- to 3'-direction to yield nucleoside 3'-phosphates.. It catalyses the reaction a 5'-end 5'-dephospho-ribonucleotidyl-ribonucleotide-RNA + H2O = a ribonucleoside 3'-phosphate + a 5'-end dephospho-ribonucleoside-RNA + H(+). The catalysed reaction is a ribonucleoside 3'-phosphate-2'-3'-cyclophospho-GMP + H2O = a ribonucleoside 3'-phosphate + 2',3'-cyclophospho-GMP + H(+). It carries out the reaction a 5'-end 5'-dephospho-2'-deoxyribonucleotidyl-2'-deoxyribonucleotide in single-stranded DNA + H2O = a 5'-end dephospho-2'-deoxyribonucleoside in single-stranded DNA + a 2'-deoxyribonucleoside 3'-phosphate + H(+). The enzyme catalyses a 5'-end 5'-phospho-2'-deoxyribonucleotide in single-stranded DNA + H2O = a 5'-end 5'-dephospho-2'-deoxyribonucleotide in single-stranded DNA + phosphate. It catalyses the reaction a 3-lyso-sn-glycero-1-phospho-(3'-acyl-1'-sn-glycerol) + a 1-acyl-sn-glycerol = a 3-acyl-sn-glycero-1-phospho-(3'-acyl-1'-sn-glycerol) + glycerol. The catalysed reaction is 3-lyso-sn-glycero-1-phospho-(3'-(9Z-octadecenoyl)-1'-sn-glycerol) + 1-(9Z-octadecenoyl)-sn-glycerol = 3-(9Z-octadecenoyl)-sn-glycero-1-phospho-(3'-(9Z-octadecenoyl)-1'-sn-glycerol) + glycerol. The exonuclease activity toward ssDNA substrate is Ca(2+) and Mg(2+)-independent, but it is inhibited by Fe(2+), Cu(2+) and to a lesser extent Zn(2+) ions. In terms of biological role, 5'-&gt;3' exonuclease that hydrolyzes the phosphodiester bond of single-stranded DNA (ssDNA) and RNA molecules to form nucleoside 3'-monophosphates and 5'-end 5'-hydroxy deoxyribonucleotide/ribonucleotide fragments. Partially redundant with PLD4, can cleave all four nucleotides displaying higher efficiency for ssDNA and RNA fragments initiated with uridine and guanosine residues and lower efficiency for cytidine-initiated substrates. As a result, it does not always degrade polynucleotides to the single nucleotide level, it can stall at specific sites sparing certain fragments from exonucleolytic degradation. Processes self and pathogenic ssDNA and RNA molecules that reach the endolysosomal compartment via phagocytosis or autophagy and may serve as 'danger' signals for recognition by innate immune receptors such as toll-like receptors (TLRs). Degrades mitochondrial CpG-rich ssDNA fragments to prevent TLR9 activation and autoinflammatory response, but it can cleave viral RNA to generate ligands for TLR7 activation and initiate antiviral immune responses. In plasmacytoid dendritic cells, it cooperates with endonuclease RNASET2 to release 2',3'-cyclic guanosine monophosphate (2',3'-cGMP), a potent stimulatory ligand for TLR7. Produces 2',3'-cGMPs and cytidine-rich RNA fragments that occupy TLR7 ligand-binding pockets and trigger a signaling-competent state. Can exert polynucleotide phosphatase activity toward 5'-phosphorylated ssDNA substrates although at a slow rate. Transphosphatidylase that catalyzes the exchange with R to S stereo-inversion of the glycerol moiety between (S,R)-lysophosphatidylglycerol (LPG) and monoacylglycerol (MAG) substrates to yield (S,S)-bis(monoacylglycero)phosphate (BMP). Can synthesize a variety of (S,S)-BMPs representing the main phospholipid constituent of lysosomal intralumenal vesicle (ILV) membranes that bind acid hydrolases for lipid degradation. Regulates the homeostasis and interorganellar communication of the endolysosomal system with an overall impact on cellular removal of dysfunctional organelles via autophagy as well as proper protein and lipid turnover. May play a role in myotube formation in response to ER stress. The chain is 5'-3' exonuclease PLD3 from Homo sapiens (Human).